Here is a 194-residue protein sequence, read N- to C-terminus: Peptidyl-tRNA hydrolase (194 aa).

Residue Tyr-16 coordinates tRNA. The Proton acceptor role is filled by His-21. Residues Tyr-67, Asn-69, and Asn-115 each coordinate tRNA.

It belongs to the PTH family. As to quaternary structure, monomer.

Its subcellular location is the cytoplasm. The enzyme catalyses an N-acyl-L-alpha-aminoacyl-tRNA + H2O = an N-acyl-L-amino acid + a tRNA + H(+). In terms of biological role, hydrolyzes ribosome-free peptidyl-tRNAs (with 1 or more amino acids incorporated), which drop off the ribosome during protein synthesis, or as a result of ribosome stalling. Catalyzes the release of premature peptidyl moieties from peptidyl-tRNA molecules trapped in stalled 50S ribosomal subunits, and thus maintains levels of free tRNAs and 50S ribosomes. This chain is Peptidyl-tRNA hydrolase, found in Synechocystis sp. (strain ATCC 27184 / PCC 6803 / Kazusa).